Here is a 157-residue protein sequence, read N- to C-terminus: Transcription elongation factor GreA (157 aa).

The protein belongs to the GreA/GreB family.

Its function is as follows. Necessary for efficient RNA polymerase transcription elongation past template-encoded arresting sites. The arresting sites in DNA have the property of trapping a certain fraction of elongating RNA polymerases that pass through, resulting in locked ternary complexes. Cleavage of the nascent transcript by cleavage factors such as GreA or GreB allows the resumption of elongation from the new 3'terminus. GreA releases sequences of 2 to 3 nucleotides. This chain is Transcription elongation factor GreA, found in Mesorhizobium japonicum (strain LMG 29417 / CECT 9101 / MAFF 303099) (Mesorhizobium loti (strain MAFF 303099)).